The following is a 370-amino-acid chain: Tryptophan--tRNA ligase (370 aa).

The 'HIGH' region motif lies at Pro-75 to His-83. The short motif at Lys-255–Ser-259 is the 'KMSKS' region element.

Belongs to the class-I aminoacyl-tRNA synthetase family.

It is found in the cytoplasm. It carries out the reaction tRNA(Trp) + L-tryptophan + ATP = L-tryptophyl-tRNA(Trp) + AMP + diphosphate + H(+). The sequence is that of Tryptophan--tRNA ligase from Methanocaldococcus jannaschii (strain ATCC 43067 / DSM 2661 / JAL-1 / JCM 10045 / NBRC 100440) (Methanococcus jannaschii).